The chain runs to 125 residues: Aspartate 1-decarboxylase (125 aa).

The Schiff-base intermediate with substrate; via pyruvic acid role is filled by Ser25. Residue Ser25 is modified to Pyruvic acid (Ser). Thr57 lines the substrate pocket. Tyr58 functions as the Proton donor in the catalytic mechanism. 71-73 (GAA) is a binding site for substrate.

Belongs to the PanD family. As to quaternary structure, heterooctamer of four alpha and four beta subunits. Pyruvate is required as a cofactor. Is synthesized initially as an inactive proenzyme, which is activated by self-cleavage at a specific serine bond to produce a beta-subunit with a hydroxyl group at its C-terminus and an alpha-subunit with a pyruvoyl group at its N-terminus.

The protein resides in the cytoplasm. The catalysed reaction is L-aspartate + H(+) = beta-alanine + CO2. Its pathway is cofactor biosynthesis; (R)-pantothenate biosynthesis; beta-alanine from L-aspartate: step 1/1. Its function is as follows. Catalyzes the pyruvoyl-dependent decarboxylation of aspartate to produce beta-alanine. This Hydrogenobaculum sp. (strain Y04AAS1) protein is Aspartate 1-decarboxylase.